A 573-amino-acid polypeptide reads, in one-letter code: Poly(ribitol-phosphate) beta-N-acetylglucosaminyltransferase TarS (573 aa).

UDP-N-acetyl-alpha-D-glucosamine-binding positions include proline 9, aspartate 41, asparagine 68, arginine 76, 92–94, arginine 127, and glutamate 178; that span reads DSD. Aspartate 94 contacts Mn(2+). Aspartate 179 acts as the Proton acceptor in catalysis. Residues arginine 207 and 211–213 each bind UDP-N-acetyl-alpha-D-glucosamine; that span reads HMS.

This sequence belongs to the glycosyltransferase 2 family. In terms of assembly, homotrimer. Mn(2+) serves as cofactor.

The enzyme catalyses 4-O-[(D-ribitylphospho)(n)-di{(2R)-glycerylphospho}]-N-acetyl-beta-D-mannosaminyl-(1-&gt;4)-N-acetyl-alpha-D-glucosaminyl di-trans,octa-cis-undecaprenyl diphosphate + n UDP-N-acetyl-alpha-D-glucosamine = 4-O-([2-N-acetyl-beta-D-glucosaminyl-1-D-ribitylphospho](n)-di{[2R]-1-glycerylphospho})-N-acetyl-beta-D-mannosaminyl-(1-&gt;4)-N-acetyl-alpha-D-glucosaminyl di-trans,octa-cis-undecaprenyl diphosphate + n UDP + n H(+). Its pathway is cell wall biogenesis; poly(ribitol phosphate) teichoic acid biosynthesis. Its function is as follows. Attaches beta-O-GlcNAc (beta-O-N-acetyl-D-glucosamine) residues to the C4 position of poly(RboP)-wall teichoic acids (WTAs). Mediates beta-lactam resistance in methicillin resistant Staphylococcus aureus (MRSA) strains. The protein is Poly(ribitol-phosphate) beta-N-acetylglucosaminyltransferase TarS of Staphylococcus aureus (strain Mu50 / ATCC 700699).